We begin with the raw amino-acid sequence, 758 residues long: 5-methyltetrahydropteroyltriglutamate--homocysteine methyltransferase (758 aa).

Residues 16 to 19 (RELK) and Lys112 contribute to the 5-methyltetrahydropteroyltri-L-glutamate site. L-homocysteine contacts are provided by residues 433–435 (IGS) and Glu486. Residues 433-435 (IGS) and Glu486 each bind L-methionine. Residues 517–518 (RC) and Trp563 each bind 5-methyltetrahydropteroyltri-L-glutamate. Residue Asp601 coordinates L-homocysteine. Asp601 contacts L-methionine. Glu607 provides a ligand contact to 5-methyltetrahydropteroyltri-L-glutamate. Residues His643, Cys645, and Glu667 each coordinate Zn(2+). His696 serves as the catalytic Proton donor. Cys728 is a Zn(2+) binding site.

It belongs to the vitamin-B12 independent methionine synthase family. Requires Zn(2+) as cofactor.

It catalyses the reaction 5-methyltetrahydropteroyltri-L-glutamate + L-homocysteine = tetrahydropteroyltri-L-glutamate + L-methionine. The protein operates within amino-acid biosynthesis; L-methionine biosynthesis via de novo pathway; L-methionine from L-homocysteine (MetE route): step 1/1. Its function is as follows. Catalyzes the transfer of a methyl group from 5-methyltetrahydrofolate to homocysteine resulting in methionine formation. The chain is 5-methyltetrahydropteroyltriglutamate--homocysteine methyltransferase from Neisseria meningitidis serogroup C (strain 053442).